The primary structure comprises 219 residues: Small ribosomal subunit protein uS19 (219 aa).

Positions 1–128 are unknown; that stretch reads MGFKGAWNKR…YEEIYAQYKQ (128 aa). The small ribosomal subunit protein uS19 stretch occupies residues 129 to 219; it reads MTEKKAYVDP…DKTAKVVKKK (91 aa).

Belongs to the universal ribosomal protein uS19 family.

Functionally, protein S19 forms a complex with S13 that binds strongly to the 16S ribosomal RNA. The polypeptide is Small ribosomal subunit protein uS19 (Aquifex pyrophilus).